Reading from the N-terminus, the 133-residue chain is Ribosome-binding factor A (133 aa).

This sequence belongs to the RbfA family. In terms of assembly, monomer. Binds 30S ribosomal subunits, but not 50S ribosomal subunits or 70S ribosomes.

Its subcellular location is the cytoplasm. Functionally, one of several proteins that assist in the late maturation steps of the functional core of the 30S ribosomal subunit. Associates with free 30S ribosomal subunits (but not with 30S subunits that are part of 70S ribosomes or polysomes). Required for efficient processing of 16S rRNA. May interact with the 5'-terminal helix region of 16S rRNA. The protein is Ribosome-binding factor A of Bordetella parapertussis (strain 12822 / ATCC BAA-587 / NCTC 13253).